The primary structure comprises 179 residues: Large ribosomal subunit protein uL5 (179 aa).

The protein belongs to the universal ribosomal protein uL5 family. In terms of assembly, part of the 50S ribosomal subunit; part of the 5S rRNA/L5/L18/L25 subcomplex. Contacts the 5S rRNA and the P site tRNA. Forms a bridge to the 30S subunit in the 70S ribosome.

Its function is as follows. This is one of the proteins that bind and probably mediate the attachment of the 5S RNA into the large ribosomal subunit, where it forms part of the central protuberance. In the 70S ribosome it contacts protein S13 of the 30S subunit (bridge B1b), connecting the 2 subunits; this bridge is implicated in subunit movement. Contacts the P site tRNA; the 5S rRNA and some of its associated proteins might help stabilize positioning of ribosome-bound tRNAs. The protein is Large ribosomal subunit protein uL5 of Halothermothrix orenii (strain H 168 / OCM 544 / DSM 9562).